We begin with the raw amino-acid sequence, 173 residues long: Catabolic 3-dehydroquinase (173 aa).

The active-site Proton acceptor is Y26. Residues N102, H108, and D115 each contribute to the substrate site. The Proton donor role is filled by H128. Substrate is bound by residues 129–130 (VS) and R139.

It belongs to the type-II 3-dehydroquinase family. In terms of assembly, homododecamer. Adopts a ring-like structure, composed of an arrangement of two hexameric rings stacked on top of one another.

It carries out the reaction 3-dehydroquinate = 3-dehydroshikimate + H2O. It participates in aromatic compound metabolism; 3,4-dihydroxybenzoate biosynthesis; 3,4-dihydroxybenzoate from 3-dehydroquinate: step 1/2. Its function is as follows. 3-dehydroquinate dehydratase; part of the qa gene cluster that mediates the catabolism of quinic acid (QA) and as such, allows the use of QA as a sole carbon source. Catalyzes the second reaction in the inducible quinic acid catabolic pathway by converting 3-dehydroquinate into 3-dehydroshikimate. The qa cluster encodes 3 inducible enymes (qa-2, qa-3 and qa-4) catalyzing the first three reactions in the catabolism of quinic acid to protocatechuic acid (also known as 3,4-Dihydroxybenzoic acid). The polypeptide is Catabolic 3-dehydroquinase (Neurospora crassa (strain ATCC 24698 / 74-OR23-1A / CBS 708.71 / DSM 1257 / FGSC 987)).